The following is a 427-amino-acid chain: Phosphatidylinositol 4-phosphate 5-kinase 10 (427 aa).

One can recognise a PIPK domain in the interval 1–419 (MFTREITAKD…RFQDFVSQIF (419 aa)). Disordered regions lie at residues 247 to 287 (SRGS…DSEN) and 334 to 355 (MKIP…VGKQ). Positions 379-400 (YGVRKRLEHCYKSIQHSSKTIS) are activation loop.

It carries out the reaction a 1,2-diacyl-sn-glycero-3-phospho-(1D-myo-inositol 4-phosphate) + ATP = a 1,2-diacyl-sn-glycero-3-phospho-(1D-myo-inositol-4,5-bisphosphate) + ADP + H(+). In Arabidopsis thaliana (Mouse-ear cress), this protein is Phosphatidylinositol 4-phosphate 5-kinase 10 (PIP5K10).